Here is a 573-residue protein sequence, read N- to C-terminus: Ascochitine biosynthesis cluster transcriptional regulator (573 aa).

Its subcellular location is the nucleus. Functionally, transcription factor that regulates the expression of the gene cluster that mediates the biosynthesis of the mycotoxin ascochitine, an o-quinone methide that plays a possible protective role against other microbial competitors in nature and is considered to be important for pathogenicity of legume-associated Didymella species. This chain is Ascochitine biosynthesis cluster transcriptional regulator, found in Didymella fabae (Leaf and pod spot disease fungus).